The following is a 522-amino-acid chain: Thiamine biosynthetic bifunctional enzyme TH1, chloroplastic (522 aa).

Residues 1–36 constitute a chloroplast transit peptide; that stretch reads MNSLGGIRSWPANWRSTTASMTTTESVRKVPQVLTV. Residues 345 to 349 and asparagine 377 contribute to the 4-amino-2-methyl-5-(diphosphooxymethyl)pyrimidine site; that span reads QLREK. Mg(2+)-binding residues include aspartate 378 and aspartate 397. Serine 416 is a 4-amino-2-methyl-5-(diphosphooxymethyl)pyrimidine binding site. Residue 442–444 participates in 2-[(2R,5Z)-2-carboxy-4-methylthiazol-5(2H)-ylidene]ethyl phosphate binding; that stretch reads TNT. Lysine 445 lines the 4-amino-2-methyl-5-(diphosphooxymethyl)pyrimidine pocket. 2-[(2R,5Z)-2-carboxy-4-methylthiazol-5(2H)-ylidene]ethyl phosphate contacts are provided by residues glycine 472 and 495–496; that span reads VS.

It belongs to the thiamine-phosphate synthase family. Mg(2+) serves as cofactor.

It is found in the plastid. It localises to the chloroplast. The enzyme catalyses 2-[(2R,5Z)-2-carboxy-4-methylthiazol-5(2H)-ylidene]ethyl phosphate + 4-amino-2-methyl-5-(diphosphooxymethyl)pyrimidine + 2 H(+) = thiamine phosphate + CO2 + diphosphate. It carries out the reaction 2-(2-carboxy-4-methylthiazol-5-yl)ethyl phosphate + 4-amino-2-methyl-5-(diphosphooxymethyl)pyrimidine + 2 H(+) = thiamine phosphate + CO2 + diphosphate. The catalysed reaction is 4-methyl-5-(2-phosphooxyethyl)-thiazole + 4-amino-2-methyl-5-(diphosphooxymethyl)pyrimidine + H(+) = thiamine phosphate + diphosphate. It catalyses the reaction 4-amino-5-hydroxymethyl-2-methylpyrimidine + ATP = 4-amino-2-methyl-5-(phosphooxymethyl)pyrimidine + ADP + H(+). Its pathway is cofactor biosynthesis; thiamine diphosphate biosynthesis; thiamine phosphate from 4-amino-2-methyl-5-diphosphomethylpyrimidine and 4-methyl-5-(2-phosphoethyl)-thiazole: step 1/1. It functions in the pathway cofactor biosynthesis; thiamine diphosphate biosynthesis; 4-amino-2-methyl-5-diphosphomethylpyrimidine from 5-amino-1-(5-phospho-D-ribosyl)imidazole: step 2/3. Its function is as follows. Essential for thiamine biosynthesis. Bifunctional enzyme that catalyzes the phosphorylation of hydroxymethylpyrimidine phosphate (HMP-P) to HMP-PP and condenses 4-methyl-5-(beta-hydroxyethyl)thiazole monophosphate (THZ-P) and 2-methyl-4-amino-5-hydroxymethyl pyrimidine pyrophosphate (HMP-PP) to form thiamine monophosphate (TMP). The chain is Thiamine biosynthetic bifunctional enzyme TH1, chloroplastic (TH1) from Arabidopsis thaliana (Mouse-ear cress).